A 433-amino-acid chain; its full sequence is Enolase (433 aa).

Glutamine 167 is a (2R)-2-phosphoglycerate binding site. Residue glutamate 209 is the Proton donor of the active site. Aspartate 246, glutamate 291, and aspartate 318 together coordinate Mg(2+). (2R)-2-phosphoglycerate-binding residues include lysine 343, arginine 372, serine 373, and lysine 394. The Proton acceptor role is filled by lysine 343.

It belongs to the enolase family. As to quaternary structure, component of the RNA degradosome, a multiprotein complex involved in RNA processing and mRNA degradation. It depends on Mg(2+) as a cofactor.

It localises to the cytoplasm. It is found in the secreted. The protein localises to the cell surface. It catalyses the reaction (2R)-2-phosphoglycerate = phosphoenolpyruvate + H2O. It participates in carbohydrate degradation; glycolysis; pyruvate from D-glyceraldehyde 3-phosphate: step 4/5. Its function is as follows. Catalyzes the reversible conversion of 2-phosphoglycerate (2-PG) into phosphoenolpyruvate (PEP). It is essential for the degradation of carbohydrates via glycolysis. This is Enolase from Vibrio vulnificus (strain CMCP6).